A 233-amino-acid chain; its full sequence is Protein DEHYDRATION-INDUCED 19 homolog 2 (233 aa).

The segment at 176–215 (DLHSDSSDNNFLLNKFPDDKTAERAEPSLSEKDQKERAQR) is disordered. Over residues 191-214 (FPDDKTAERAEPSLSEKDQKERAQ) the composition is skewed to basic and acidic residues.

Belongs to the Di19 family.

This chain is Protein DEHYDRATION-INDUCED 19 homolog 2 (DI19-2), found in Oryza sativa subsp. japonica (Rice).